The following is a 428-amino-acid chain: Kynureninase (428 aa).

Residues T104, T105, 132 to 135, D213, H216, and Y238 each bind pyridoxal 5'-phosphate; that span reads FPSD. N6-(pyridoxal phosphate)lysine is present on K239. Pyridoxal 5'-phosphate contacts are provided by W267 and T295.

It belongs to the kynureninase family. In terms of assembly, homodimer. Pyridoxal 5'-phosphate is required as a cofactor.

The catalysed reaction is L-kynurenine + H2O = anthranilate + L-alanine + H(+). The enzyme catalyses 3-hydroxy-L-kynurenine + H2O = 3-hydroxyanthranilate + L-alanine + H(+). It functions in the pathway amino-acid degradation; L-kynurenine degradation; L-alanine and anthranilate from L-kynurenine: step 1/1. Its pathway is cofactor biosynthesis; NAD(+) biosynthesis; quinolinate from L-kynurenine: step 2/3. In terms of biological role, catalyzes the cleavage of L-kynurenine (L-Kyn) and L-3-hydroxykynurenine (L-3OHKyn) into anthranilic acid (AA) and 3-hydroxyanthranilic acid (3-OHAA), respectively. The protein is Kynureninase of Geobacillus thermodenitrificans (strain NG80-2).